The chain runs to 612 residues: Dihydroxy-acid dehydratase (612 aa).

Mg(2+) is bound at residue aspartate 81. Cysteine 122 is a binding site for [2Fe-2S] cluster. The Mg(2+) site is built by aspartate 123 and lysine 124. Lysine 124 is subject to N6-carboxylysine. Cysteine 193 contacts [2Fe-2S] cluster. Glutamate 489 contacts Mg(2+). The Proton acceptor role is filled by serine 515.

This sequence belongs to the IlvD/Edd family. Homodimer. [2Fe-2S] cluster is required as a cofactor. Requires Mg(2+) as cofactor.

The catalysed reaction is (2R)-2,3-dihydroxy-3-methylbutanoate = 3-methyl-2-oxobutanoate + H2O. The enzyme catalyses (2R,3R)-2,3-dihydroxy-3-methylpentanoate = (S)-3-methyl-2-oxopentanoate + H2O. It participates in amino-acid biosynthesis; L-isoleucine biosynthesis; L-isoleucine from 2-oxobutanoate: step 3/4. The protein operates within amino-acid biosynthesis; L-valine biosynthesis; L-valine from pyruvate: step 3/4. In terms of biological role, functions in the biosynthesis of branched-chain amino acids. Catalyzes the dehydration of (2R,3R)-2,3-dihydroxy-3-methylpentanoate (2,3-dihydroxy-3-methylvalerate) into 2-oxo-3-methylpentanoate (2-oxo-3-methylvalerate) and of (2R)-2,3-dihydroxy-3-methylbutanoate (2,3-dihydroxyisovalerate) into 2-oxo-3-methylbutanoate (2-oxoisovalerate), the penultimate precursor to L-isoleucine and L-valine, respectively. The polypeptide is Dihydroxy-acid dehydratase (Xanthomonas euvesicatoria pv. vesicatoria (strain 85-10) (Xanthomonas campestris pv. vesicatoria)).